A 424-amino-acid chain; its full sequence is Histidine--tRNA ligase (424 aa).

The protein belongs to the class-II aminoacyl-tRNA synthetase family. Homodimer.

The protein localises to the cytoplasm. It carries out the reaction tRNA(His) + L-histidine + ATP = L-histidyl-tRNA(His) + AMP + diphosphate + H(+). This Salmonella typhi protein is Histidine--tRNA ligase.